The sequence spans 331 residues: Tryptophan--tRNA ligase (331 aa).

Residues 10–12 and 18–19 contribute to the ATP site; these read QPS and GN. Residues 11–19 carry the 'HIGH' region motif; it reads PSGQLTLGN. Asp-133 contributes to the L-tryptophan binding site. Residues 145 to 147, Val-184, and 193 to 197 each bind ATP; these read GED and KMSKS. The 'KMSKS' region signature appears at 193–197; sequence KMSKS.

It belongs to the class-I aminoacyl-tRNA synthetase family. As to quaternary structure, homodimer.

The protein localises to the cytoplasm. The catalysed reaction is tRNA(Trp) + L-tryptophan + ATP = L-tryptophyl-tRNA(Trp) + AMP + diphosphate + H(+). Catalyzes the attachment of tryptophan to tRNA(Trp). This chain is Tryptophan--tRNA ligase, found in Listeria innocua serovar 6a (strain ATCC BAA-680 / CLIP 11262).